Consider the following 87-residue polypeptide: Insulin-related peptide 1 (87 aa).

The N-terminal stretch at 1–19 (MKSFMVFVLIFACFSCYYA) is a signal peptide. A propeptide spanning residues 20-44 (QESTNFYCGRTLSRALAVLCYGAES) is cleaved from the precursor. R64 is modified (arginine amide). A propeptide spanning residues 68–87 (GPVDECCEKACSIQELMTYC) is cleaved from the precursor.

This sequence belongs to the insulin family. In terms of tissue distribution, DAGWWIPQHGHHALAGVR-amide: Expressed in corpora cardiaca (CC), corpora allata (CA), antennal lobe (AL) and gnathal ganglion (GNG) (at protein level). Expression in CC and CA detected in most animals, in AL and GNG in few animals (at protein level).

It is found in the secreted. This chain is Insulin-related peptide 1, found in Agrotis ipsilon (Black cutworm moth).